We begin with the raw amino-acid sequence, 108 residues long: Nascent polypeptide-associated complex protein (108 aa).

Positions 1-68 (MNPREIRRMM…LREVKKEVEQ (68 aa)) constitute an NAC-A/B domain.

It belongs to the NAC-alpha family. In terms of assembly, homodimer. Interacts with the ribosome. Binds ribosomal RNA.

Functionally, contacts the emerging nascent chain on the ribosome. This is Nascent polypeptide-associated complex protein from Picrophilus torridus (strain ATCC 700027 / DSM 9790 / JCM 10055 / NBRC 100828 / KAW 2/3).